We begin with the raw amino-acid sequence, 250 residues long: UPF0524 protein C3orf70 (250 aa).

Residues 201–250 are disordered; it reads ESCDEDTEEGAELSSEEDYSPESSWEPDECTLLSPSQSDLEVIETIETTV. Over residues 202-229 the composition is skewed to acidic residues; the sequence is SCDEDTEEGAELSSEEDYSPESSWEPDE.

The protein belongs to the UPF0524 family.

Its function is as follows. May play a role in neuronal and neurobehavioral development. The sequence is that of UPF0524 protein C3orf70 (C3orf70) from Homo sapiens (Human).